The sequence spans 234 residues: Probable pectate lyase F (234 aa).

The signal sequence occupies residues 1 to 17; it reads MFSRIALLPAFLPVALA. Asparagine 168 and asparagine 194 each carry an N-linked (GlcNAc...) asparagine glycan.

Belongs to the polysaccharide lyase 3 family. It depends on Ca(2+) as a cofactor.

It localises to the secreted. The catalysed reaction is Eliminative cleavage of (1-&gt;4)-alpha-D-galacturonan to give oligosaccharides with 4-deoxy-alpha-D-galact-4-enuronosyl groups at their non-reducing ends.. In terms of biological role, pectinolytic enzyme consist of four classes of enzymes: pectin lyase, polygalacturonase, pectin methylesterase and rhamnogalacturonase. Among pectinolytic enzymes, pectin lyase is the most important in depolymerization of pectin, since it cleaves internal glycosidic bonds of highly methylated pectins. Favors pectate, the anion, over pectin, the methyl ester. The sequence is that of Probable pectate lyase F (plyF) from Aspergillus flavus (strain ATCC 200026 / FGSC A1120 / IAM 13836 / NRRL 3357 / JCM 12722 / SRRC 167).